Here is a 925-residue protein sequence, read N- to C-terminus: Bifunctional imidazolonepropionase/histidine ammonia-lyase (925 aa).

The tract at residues 1 to 414 is imidazolonepropionase; the sequence is MTKNSSTVFT…IKPHVRMEPF (414 aa). Fe(3+) is bound by residues His73 and His75. 2 residues coordinate Zn(2+): His73 and His75. 4-imidazolone-5-propanoate-binding residues include Arg82, Tyr145, and His178. Tyr145 lines the N-formimidoyl-L-glutamate pocket. His243 serves as a coordination point for Fe(3+). His243 contacts Zn(2+). Gln246 is a 4-imidazolone-5-propanoate binding site. Residue Asp318 participates in Fe(3+) binding. Asp318 is a binding site for Zn(2+). 2 residues coordinate N-formimidoyl-L-glutamate: Asn320 and Gly322. Thr323 is a 4-imidazolone-5-propanoate binding site. The histidine ammonia-lyase stretch occupies residues 415 to 925; that stretch reads MTIILKPGSV…SAGILPDLEA (511 aa). A cross-link (5-imidazolinone (Ala-Gly)) is located at residues 556–558; that stretch reads ASG. A 2,3-didehydroalanine (Ser) modification is found at Ser557.

In the N-terminal section; belongs to the metallo-dependent hydrolases superfamily. HutI family. This sequence in the C-terminal section; belongs to the PAL/histidase family. The cofactor is Zn(2+). Fe(3+) is required as a cofactor. In terms of processing, contains an active site 4-methylidene-imidazol-5-one (MIO), which is formed autocatalytically by cyclization and dehydration of residues Ala-Ser-Gly.

The protein resides in the cytoplasm. It carries out the reaction 4-imidazolone-5-propanoate + H2O = N-formimidoyl-L-glutamate. It catalyses the reaction L-histidine = trans-urocanate + NH4(+). The protein operates within amino-acid degradation; L-histidine degradation into L-glutamate; N-formimidoyl-L-glutamate from L-histidine: step 1/3. It functions in the pathway amino-acid degradation; L-histidine degradation into L-glutamate; N-formimidoyl-L-glutamate from L-histidine: step 3/3. Catalyzes the hydrolytic cleavage of the carbon-nitrogen bond in imidazolone-5-propanoate to yield N-formimidoyl-L-glutamate. It is the third step in the universal histidine degradation pathway. In Brucella melitensis biotype 1 (strain ATCC 23456 / CCUG 17765 / NCTC 10094 / 16M), this protein is Bifunctional imidazolonepropionase/histidine ammonia-lyase (hutIH).